The following is a 160-amino-acid chain: Protransforming growth factor alpha (160 aa).

The first 23 residues, 1-23 (MVPSAGQFALFALGILLAVCQAL), serve as a signal peptide directing secretion. A propeptide spans 24–39 (ENSTSALSADPPIAAA) (removed in mature form). Residues 24–98 (ENSTSALSAD…AVVAASQKKQ (75 aa)) are Extracellular-facing. A glycan (N-linked (GlcNAc...) asparagine) is linked at Asn-25. The EGF-like domain maps to 43 to 83 (HFNDCPDSHSQFCFHGTCRFLVQEDKPACVCHSGYVGARCE). 3 disulfides stabilise this stretch: Cys-47-Cys-60, Cys-55-Cys-71, and Cys-73-Cys-82. The propeptide at 90–160 (VVAASQKKQA…TACCHSETVV (71 aa)) is removed in mature form. A helical transmembrane segment spans residues 99–124 (AITALVVVSIVALAVLIITCVLIHCC). The Cytoplasmic portion of the chain corresponds to 125–160 (QVRKHCEWCRALICRHEKPSALLKGRTACCHSETVV). S-palmitoyl cysteine attachment occurs at residues Cys-153 and Cys-154.

As to quaternary structure, interacts with the PDZ domains of MAGI3, SDCBP and SNTA1. The interaction with SDCBP, is required for the targeting to the cell surface. In the endoplasmic reticulum, in its immature form (i.e. with a prosegment and lacking full N-glycosylation), interacts with CNIH. In the Golgi apparatus, may form a complex with CNIH and GORASP2. Interacts (via cytoplasmic C-terminal domain) with NKD2.

It localises to the secreted. The protein resides in the extracellular space. It is found in the cell membrane. TGF alpha is a mitogenic polypeptide that is able to bind to the EGF receptor/EGFR and to act synergistically with TGF beta to promote anchorage-independent cell proliferation in soft agar. The polypeptide is Protransforming growth factor alpha (TGFA) (Sus scrofa (Pig)).